The following is an 87-amino-acid chain: Small ribosomal subunit protein eS21 (87 aa).

M1 is subject to N-acetylmethionine.

It belongs to the eukaryotic ribosomal protein eS21 family. In terms of assembly, component of the small ribosomal subunit (SSU). Mature yeast ribosomes consist of a small (40S) and a large (60S) subunit. The 40S small subunit contains 1 molecule of ribosomal RNA (18S rRNA) and at least 33 different proteins. The large 60S subunit contains 3 rRNA molecules (25S, 5.8S and 5S rRNA) and at least 46 different proteins. Interacts with uS2A and uS2B, strongest interaction is with uS2B.

The protein localises to the cytoplasm. The protein resides in the nucleus. Functionally, component of the ribosome, a large ribonucleoprotein complex responsible for the synthesis of proteins in the cell. The small ribosomal subunit (SSU) binds messenger RNAs (mRNAs) and translates the encoded message by selecting cognate aminoacyl-transfer RNA (tRNA) molecules. The large subunit (LSU) contains the ribosomal catalytic site termed the peptidyl transferase center (PTC), which catalyzes the formation of peptide bonds, thereby polymerizing the amino acids delivered by tRNAs into a polypeptide chain. The nascent polypeptides leave the ribosome through a tunnel in the LSU and interact with protein factors that function in enzymatic processing, targeting, and the membrane insertion of nascent chains at the exit of the ribosomal tunnel. eS21 is required for the processing of the 20S rRNA-precursor to mature 18S rRNA in a late step of the maturation of 40S ribosomal subunits. Has a physiological role leading to 18S rRNA stability. The polypeptide is Small ribosomal subunit protein eS21 (rps21) (Schizosaccharomyces pombe (strain 972 / ATCC 24843) (Fission yeast)).